The chain runs to 58 residues: Small ribosomal subunit protein bS21 (58 aa).

The tract at residues 36 to 58 is disordered; the sequence is EFYEKPSVKRKRKSEAARKRKKF. Positions 43–58 are enriched in basic residues; the sequence is VKRKRKSEAARKRKKF.

The protein belongs to the bacterial ribosomal protein bS21 family.

The chain is Small ribosomal subunit protein bS21 from Streptococcus uberis (strain ATCC BAA-854 / 0140J).